The sequence spans 130 residues: Large ribosomal subunit protein bL20 (130 aa).

It belongs to the bacterial ribosomal protein bL20 family.

In terms of biological role, binds directly to 23S ribosomal RNA and is necessary for the in vitro assembly process of the 50S ribosomal subunit. It is not involved in the protein synthesizing functions of that subunit. The chain is Large ribosomal subunit protein bL20 from Clavibacter michiganensis subsp. michiganensis (strain NCPPB 382).